The chain runs to 686 residues: DNA gyrase subunit B (686 aa).

Residues 1–27 are compositionally biased toward polar residues; that stretch reads MADSGNPNENNPSTDTGVNDAVSTSHG. A disordered region spans residues 1-29; sequence MADSGNPNENNPSTDTGVNDAVSTSHGDA. Residues 465-579 enclose the Toprim domain; it reads CEIFIVEGDS…SGHVYLSRPP (115 aa). The Mg(2+) site is built by E471, D544, and D546.

Belongs to the type II topoisomerase GyrB family. Heterotetramer, composed of two GyrA and two GyrB chains. In the heterotetramer, GyrA contains the active site tyrosine that forms a transient covalent intermediate with DNA, while GyrB binds cofactors and catalyzes ATP hydrolysis. Mg(2+) serves as cofactor. Mn(2+) is required as a cofactor. The cofactor is Ca(2+).

The protein resides in the cytoplasm. The enzyme catalyses ATP-dependent breakage, passage and rejoining of double-stranded DNA.. Its function is as follows. A type II topoisomerase that negatively supercoils closed circular double-stranded (ds) DNA in an ATP-dependent manner to modulate DNA topology and maintain chromosomes in an underwound state. Negative supercoiling favors strand separation, and DNA replication, transcription, recombination and repair, all of which involve strand separation. Also able to catalyze the interconversion of other topological isomers of dsDNA rings, including catenanes and knotted rings. Type II topoisomerases break and join 2 DNA strands simultaneously in an ATP-dependent manner. This is DNA gyrase subunit B from Streptomyces coelicolor (strain ATCC BAA-471 / A3(2) / M145).